The following is a 281-amino-acid chain: Arabinooligosaccharides transport system permease protein AraQ (281 aa).

A run of 6 helical transmembrane segments spans residues 15-35 (LTLF…CLLL), 81-101 (LVLG…IGYG), 112-132 (IIFV…MLPL), 142-162 (IDSY…VFFF), 185-205 (FGIF…AMII), and 247-267 (MLIS…LFFQ). The ABC transmembrane type-1 domain maps to 77–266 (FFNSLVLGLF…LPVIIIFLFF (190 aa)).

It belongs to the binding-protein-dependent transport system permease family. MalFG subfamily. The complex is composed of two ATP-binding proteins (MsmX), two transmembrane proteins (AraP and AraQ) and a solute-binding protein (AraN).

It localises to the cell membrane. Its function is as follows. Part of the ABC transporter complex AraNPQ involved in the uptake of arabinooligosaccharides. Transports alpha-1,5-arabinooligosaccharides, at least up to four L-arabinosyl units. Responsible for the translocation of the substrate across the membrane. In Bacillus subtilis (strain 168), this protein is Arabinooligosaccharides transport system permease protein AraQ.